A 266-amino-acid polypeptide reads, in one-letter code: ATP synthase subunit a (266 aa).

6 helical membrane-spanning segments follow: residues 38 to 58 (KQMLLVILSVVIIATFFILAA), 99 to 119 (LLFSLFFFILVNNIYGAIPVI), 126 to 146 (HVGGAYVMAGIVYFTWIIIGI), 162 to 182 (GVPWYILPIVVPIEIISNFLV), 191 to 211 (LFATMLAGHLIVMLAGSGIEF), and 224 to 244 (SVLVLVGAVAMYMLEALIMAL).

Belongs to the ATPase A chain family. F-type ATPases have 2 components, CF(1) - the catalytic core - and CF(0) - the membrane proton channel. CF(1) has five subunits: alpha(3), beta(3), gamma(1), delta(1), epsilon(1). CF(0) has three main subunits: a(1), b(2) and c(9-12). The alpha and beta chains form an alternating ring which encloses part of the gamma chain. CF(1) is attached to CF(0) by a central stalk formed by the gamma and epsilon chains, while a peripheral stalk is formed by the delta and b chains.

It is found in the cell membrane. Functionally, key component of the proton channel; it plays a direct role in the translocation of protons across the membrane. The polypeptide is ATP synthase subunit a (Paenarthrobacter aurescens (strain TC1)).